We begin with the raw amino-acid sequence, 325 residues long: UDP-N-acetylenolpyruvoylglucosamine reductase (325 aa).

An FAD-binding PCMH-type domain is found at 40–221; the sequence is RTGGLAELFY…RAAMDEVALH (182 aa). Arginine 186 is a catalytic residue. Serine 235 functions as the Proton donor in the catalytic mechanism. The active site involves glutamate 305.

Belongs to the MurB family. FAD is required as a cofactor.

Its subcellular location is the cytoplasm. It catalyses the reaction UDP-N-acetyl-alpha-D-muramate + NADP(+) = UDP-N-acetyl-3-O-(1-carboxyvinyl)-alpha-D-glucosamine + NADPH + H(+). It functions in the pathway cell wall biogenesis; peptidoglycan biosynthesis. Functionally, cell wall formation. This chain is UDP-N-acetylenolpyruvoylglucosamine reductase, found in Bartonella henselae (strain ATCC 49882 / DSM 28221 / CCUG 30454 / Houston 1) (Rochalimaea henselae).